The following is a 228-amino-acid chain: MTFDRSIKIAPSILSADFADFGREIQAIEAQGADWVHVDVMDGHFVPNLTFGPPAVAAFRKHVKTVMDVHLMISPVDAYIDAYAQAGADVLTAHVEAGPHIHRTLQAIRAAGMKSGVAINPGTPAEAIEHVLDIADVVCVMTVNPGFGGQKYIDMTAKVRKLRAMIGDRPVHIEIDGGMDPVTAPLMAAAGADVFVAGSGVFKGGSVSTPEVYGKNIAAIRAAAQAAL.

Residue S12 coordinates substrate. Residues H37, D39, and H70 each contribute to the a divalent metal cation site. Residue D39 is the Proton acceptor of the active site. Substrate-binding positions include H70, 146 to 149 (GFGG), 176 to 178 (DGG), and 198 to 199 (GS). D176 contributes to the a divalent metal cation binding site. D176 (proton donor) is an active-site residue.

The protein belongs to the ribulose-phosphate 3-epimerase family. A divalent metal cation is required as a cofactor.

It catalyses the reaction D-ribulose 5-phosphate = D-xylulose 5-phosphate. It participates in carbohydrate degradation. In terms of biological role, catalyzes the reversible epimerization of D-ribulose 5-phosphate to D-xylulose 5-phosphate. The sequence is that of Ribulose-phosphate 3-epimerase from Rhodobacter capsulatus (Rhodopseudomonas capsulata).